The following is a 333-amino-acid chain: NADH-quinone oxidoreductase subunit H (333 aa).

8 helical membrane passes run 15–35 (FFIF…FVTY), 88–108 (FILA…VIPF), 117–137 (IGVG…GVVT), 159–179 (ISYE…AGSL), 191–211 (VWYI…AVAE), 239–259 (WAFF…LITV), 272–294 (GFIP…LIWF), and 313–333 (ILLP…ELFF).

This sequence belongs to the complex I subunit 1 family. As to quaternary structure, NDH-1 is composed of 14 different subunits. Subunits NuoA, H, J, K, L, M, N constitute the membrane sector of the complex.

The protein resides in the cell membrane. The catalysed reaction is a quinone + NADH + 5 H(+)(in) = a quinol + NAD(+) + 4 H(+)(out). In terms of biological role, NDH-1 shuttles electrons from NADH, via FMN and iron-sulfur (Fe-S) centers, to quinones in the respiratory chain. The immediate electron acceptor for the enzyme in this species is believed to be ubiquinone. Couples the redox reaction to proton translocation (for every two electrons transferred, four hydrogen ions are translocated across the cytoplasmic membrane), and thus conserves the redox energy in a proton gradient. This subunit may bind ubiquinone. The polypeptide is NADH-quinone oxidoreductase subunit H (Bacillus mycoides (strain KBAB4) (Bacillus weihenstephanensis)).